A 268-amino-acid polypeptide reads, in one-letter code: D-alanyl-D-alanine carboxypeptidase (268 aa).

Residues 25 to 47 (AFLWAFIISFTVCTLFLGWRLVS) form a helical membrane-spanning segment. Substrate is bound by residues Q151, 179–181 (WVA), and S186. Residues H188 and D195 each contribute to the Zn(2+) site. The active-site Proton donor/acceptor is E238. H241 contacts Zn(2+).

This sequence belongs to the peptidase M15B family. Monomer. Zn(2+) serves as cofactor.

It is found in the cell membrane. With respect to regulation, carboxypeptidase activity is insensitive to beta-lactams since it is not affected by penicillin G or ampicillin and is inhibited only by very high concentrations of cefalotin and cefoxitin. Carboxypeptidase that cleaves the C-terminal D-alanine residue from the peptidoglycan-derived pentapeptide L-Ala-gamma-D-Glu-L-Lys-D-Ala-D-Ala in vitro. Therefore, should contribute in vivo to the hydrolysis of the D-alanyl-D-alanine-containing peptidoglycan precursors. May increase the level of glycopeptide antibiotics resistance by decreasing the availability of D-Ala-D-Ala termini from the cell surface, which constitute the antibiotic target residues. The sequence is that of D-alanyl-D-alanine carboxypeptidase from Enterococcus faecalis (strain ATCC 700802 / V583).